The following is a 543-amino-acid chain: ATP synthase subunit alpha (543 aa).

174–181 (GDRQTGKT) lines the ATP pocket. Residues 521 to 543 (VEKKPDVDKAAPVDQEKIVAGEK) are disordered.

The protein belongs to the ATPase alpha/beta chains family. As to quaternary structure, F-type ATPases have 2 components, CF(1) - the catalytic core - and CF(0) - the membrane proton channel. CF(1) has five subunits: alpha(3), beta(3), gamma(1), delta(1), epsilon(1). CF(0) has three main subunits: a(1), b(2) and c(9-12). The alpha and beta chains form an alternating ring which encloses part of the gamma chain. CF(1) is attached to CF(0) by a central stalk formed by the gamma and epsilon chains, while a peripheral stalk is formed by the delta and b chains.

The protein resides in the cell membrane. The catalysed reaction is ATP + H2O + 4 H(+)(in) = ADP + phosphate + 5 H(+)(out). In terms of biological role, produces ATP from ADP in the presence of a proton gradient across the membrane. The alpha chain is a regulatory subunit. The polypeptide is ATP synthase subunit alpha (Bifidobacterium longum (strain DJO10A)).